We begin with the raw amino-acid sequence, 170 residues long: Transcriptional repressor NrdR (170 aa).

The segment at 3–34 (CPFCRHPDSRVVDSRVTDDGTAIRRRRSCPEC) is a zinc-finger region. One can recognise an ATP-cone domain in the interval 46 to 136 (LSVIKRSGVI…VYRGFESLED (91 aa)). A disordered region spans residues 151–170 (ERSETVERGRPVPSRGVDDR).

The protein belongs to the NrdR family. The cofactor is Zn(2+).

In terms of biological role, negatively regulates transcription of bacterial ribonucleotide reductase nrd genes and operons by binding to NrdR-boxes. This is Transcriptional repressor NrdR from Acidothermus cellulolyticus (strain ATCC 43068 / DSM 8971 / 11B).